Here is a 269-residue protein sequence, read N- to C-terminus: 5'-nucleotidase SurE (269 aa).

A divalent metal cation contacts are provided by Asp8, Asp9, Ser40, and Asn93.

It belongs to the SurE nucleotidase family. The cofactor is a divalent metal cation.

The protein resides in the cytoplasm. The enzyme catalyses a ribonucleoside 5'-phosphate + H2O = a ribonucleoside + phosphate. Nucleotidase that shows phosphatase activity on nucleoside 5'-monophosphates. The protein is 5'-nucleotidase SurE of Caulobacter sp. (strain K31).